A 496-amino-acid chain; its full sequence is Probable cytosol aminopeptidase (496 aa).

Lys257 and Asp262 together coordinate Mn(2+). Lys269 is an active-site residue. Mn(2+) is bound by residues Asp281, Asp341, and Glu343. Residue Arg345 is part of the active site.

Belongs to the peptidase M17 family. Mn(2+) serves as cofactor.

It localises to the cytoplasm. The catalysed reaction is Release of an N-terminal amino acid, Xaa-|-Yaa-, in which Xaa is preferably Leu, but may be other amino acids including Pro although not Arg or Lys, and Yaa may be Pro. Amino acid amides and methyl esters are also readily hydrolyzed, but rates on arylamides are exceedingly low.. The enzyme catalyses Release of an N-terminal amino acid, preferentially leucine, but not glutamic or aspartic acids.. Functionally, presumably involved in the processing and regular turnover of intracellular proteins. Catalyzes the removal of unsubstituted N-terminal amino acids from various peptides. This chain is Probable cytosol aminopeptidase, found in Prochlorococcus marinus (strain SARG / CCMP1375 / SS120).